The chain runs to 583 residues: DNA ligase (583 aa).

Glutamate 249 contacts ATP. Lysine 251 functions as the N6-AMP-lysine intermediate in the catalytic mechanism. Positions 256, 271, 301, 341, 416, and 422 each coordinate ATP.

It belongs to the ATP-dependent DNA ligase family. Requires Mg(2+) as cofactor.

It carries out the reaction ATP + (deoxyribonucleotide)n-3'-hydroxyl + 5'-phospho-(deoxyribonucleotide)m = (deoxyribonucleotide)n+m + AMP + diphosphate.. DNA ligase that seals nicks in double-stranded DNA during DNA replication, DNA recombination and DNA repair. The sequence is that of DNA ligase from Pyrobaculum calidifontis (strain DSM 21063 / JCM 11548 / VA1).